Here is a 213-residue protein sequence, read N- to C-terminus: Uridine kinase (213 aa).

ATP is bound at residue 14–21 (GASASGKS).

This sequence belongs to the uridine kinase family.

Its subcellular location is the cytoplasm. The enzyme catalyses uridine + ATP = UMP + ADP + H(+). It catalyses the reaction cytidine + ATP = CMP + ADP + H(+). The protein operates within pyrimidine metabolism; CTP biosynthesis via salvage pathway; CTP from cytidine: step 1/3. It participates in pyrimidine metabolism; UMP biosynthesis via salvage pathway; UMP from uridine: step 1/1. This chain is Uridine kinase, found in Vibrio cholerae serotype O1 (strain ATCC 39315 / El Tor Inaba N16961).